Reading from the N-terminus, the 153-residue chain is Selenoprotein F (153 aa).

A signal peptide spans Met-1–Ser-19. Sec-84 is a non-standard amino acid (selenocysteine).

This sequence belongs to the selenoprotein M/F family. As to expression, higher levels in polster, prechordal plate, axis, otic vesicle and somites. Lower levels in fin buds.

Its subcellular location is the endoplasmic reticulum lumen. Functionally, may be involved in redox reactions associated with the formation of disulfide bonds. May contribute to the quality control of protein folding in the endoplasmic reticulum. This is Selenoprotein F from Danio rerio (Zebrafish).